The chain runs to 209 residues: Octanoyltransferase (209 aa).

Residues 30 to 209 (GEAPEAVYLV…LEVEFIKIFK (180 aa)) form the BPL/LPL catalytic domain. Substrate is bound by residues 69–76 (RGGKFTFH), 143–145 (AIG), and 156–158 (GIA). The Acyl-thioester intermediate role is filled by C174.

Belongs to the LipB family.

The protein localises to the cytoplasm. The enzyme catalyses octanoyl-[ACP] + L-lysyl-[protein] = N(6)-octanoyl-L-lysyl-[protein] + holo-[ACP] + H(+). The protein operates within protein modification; protein lipoylation via endogenous pathway; protein N(6)-(lipoyl)lysine from octanoyl-[acyl-carrier-protein]: step 1/2. In terms of biological role, catalyzes the transfer of endogenously produced octanoic acid from octanoyl-acyl-carrier-protein onto the lipoyl domains of lipoate-dependent enzymes. Lipoyl-ACP can also act as a substrate although octanoyl-ACP is likely to be the physiological substrate. This Rickettsia bellii (strain OSU 85-389) protein is Octanoyltransferase.